The chain runs to 169 residues: Ribosome maturation factor RimM (169 aa).

In terms of domain architecture, PRC barrel spans 94–168; that stretch reads DDEFYHADLI…RIVADPPEGL (75 aa).

It belongs to the RimM family. Binds ribosomal protein uS19.

The protein resides in the cytoplasm. In terms of biological role, an accessory protein needed during the final step in the assembly of 30S ribosomal subunit, possibly for assembly of the head region. Essential for efficient processing of 16S rRNA. May be needed both before and after RbfA during the maturation of 16S rRNA. It has affinity for free ribosomal 30S subunits but not for 70S ribosomes. This Cereibacter sphaeroides (strain ATCC 17029 / ATH 2.4.9) (Rhodobacter sphaeroides) protein is Ribosome maturation factor RimM.